Reading from the N-terminus, the 446-residue chain is Delta(8)-fatty-acid desaturase (446 aa).

Residues lysine 5–serine 89 form the Cytochrome b5 heme-binding domain. Positions 40 and 63 each coordinate heme. The next 2 helical transmembrane spans lie at valine 112–cysteine 132 and leucine 136–leucine 156. The Histidine box-1 signature appears at histidine 158–histidine 162. Helical transmembrane passes span phenylalanine 174–histidine 195, isoleucine 253–phenylalanine 273, alanine 282–leucine 302, and valine 309–asparagine 329. A Histidine box-2 motif is present at residues histidine 195–histidine 199. The Histidine box-3 signature appears at glutamine 372–histidine 376.

It belongs to the fatty acid desaturase type 1 family. Requires Fe cation as cofactor. As to expression, expressed only in young leaves.

It is found in the membrane. The catalysed reaction is an N-acyl-(4R)-4-hydroxysphinganine + 2 Fe(II)-[cytochrome b5] + O2 + 2 H(+) = a (4R,8E)-4-hydroxysphingenine ceramide + 2 Fe(III)-[cytochrome b5] + 2 H2O. It catalyses the reaction an N-acyl-(4R)-4-hydroxysphinganine + 2 Fe(II)-[cytochrome b5] + O2 + 2 H(+) = a (4R,8Z)-4-hydroxysphing-8-enine ceramide + 2 Fe(III)-[cytochrome b5] + 2 H2O. Its function is as follows. Plays a major role as delta(8)-fatty-acid desaturase which introduces a double bond at the 8-position in the long-chain base (LCB) of ceramides with or without a hydroxy group at the 4-position. The enzyme produces both the 8E and 8Z isomers (in a 4:1 ratio). This structural modification contributes to the quantitative partitioning of ceramides between the two major sphingolipid classes, glucosylceramides and glycosylinositolphosphoryl ceramides. Sphingolipids are important membrane components involved in environmental stress responses, such as resistance to chilling, and act as cell signaling molecules. The protein is Delta(8)-fatty-acid desaturase (sld1) of Borago officinalis (Bourrache).